We begin with the raw amino-acid sequence, 562 residues long: NAD-dependent malic enzyme (562 aa).

Tyrosine 101 acts as the Proton donor in catalysis. An NAD(+)-binding site is contributed by arginine 154. Lysine 172 (proton acceptor) is an active-site residue. A divalent metal cation-binding residues include glutamate 243, aspartate 244, and aspartate 267. Positions 267 and 415 each coordinate NAD(+).

The protein belongs to the malic enzymes family. As to quaternary structure, homotetramer. Requires Mg(2+) as cofactor. It depends on Mn(2+) as a cofactor.

The enzyme catalyses (S)-malate + NAD(+) = pyruvate + CO2 + NADH. It catalyses the reaction oxaloacetate + H(+) = pyruvate + CO2. This Shewanella halifaxensis (strain HAW-EB4) protein is NAD-dependent malic enzyme.